An 865-amino-acid chain; its full sequence is Protein translocase subunit SecA (865 aa).

ATP-binding positions include glutamine 85, 103–107 (GEGKT), and aspartate 505. Zn(2+) contacts are provided by cysteine 847, cysteine 849, cysteine 858, and histidine 859.

This sequence belongs to the SecA family. In terms of assembly, monomer and homodimer. Part of the essential Sec protein translocation apparatus which comprises SecA, SecYEG and auxiliary proteins SecDF. Other proteins may also be involved. The cofactor is Zn(2+).

The protein resides in the cell membrane. It is found in the cytoplasm. It carries out the reaction ATP + H2O + cellular proteinSide 1 = ADP + phosphate + cellular proteinSide 2.. Its function is as follows. Part of the Sec protein translocase complex. Interacts with the SecYEG preprotein conducting channel. Has a central role in coupling the hydrolysis of ATP to the transfer of proteins into and across the cell membrane, serving as an ATP-driven molecular motor driving the stepwise translocation of polypeptide chains across the membrane. The polypeptide is Protein translocase subunit SecA (Lactococcus lactis subsp. lactis (strain IL1403) (Streptococcus lactis)).